A 595-amino-acid chain; its full sequence is Sulfite reductase [NADPH] flavoprotein alpha-component (595 aa).

A Flavodoxin-like domain is found at 59–197 (ITVLSASQTG…KADIWRREIV (139 aa)). FMN is bound by residues 65–70 (SQTGNA), 112–115 (STQG), and 148–157 (LGDSSYTYFA). An FAD-binding FR-type domain is found at 230–444 (EEPFTAHLVV…IEHNDNFRLP (215 aa)). Residues T318, F352, 382–385 (RLYS), 400–402 (TVS), Y406, and 415–418 (GGAS) contribute to the FAD site. NADP(+)-binding positions include 515–516 (SQ), 521–525 (KIYVQ), and D557. Y595 lines the FAD pocket.

It belongs to the NADPH-dependent sulphite reductase flavoprotein subunit CysJ family. This sequence in the N-terminal section; belongs to the flavodoxin family. In the C-terminal section; belongs to the flavoprotein pyridine nucleotide cytochrome reductase family. As to quaternary structure, alpha(8)-beta(8). The alpha component is a flavoprotein, the beta component is a hemoprotein. Requires FAD as cofactor. FMN is required as a cofactor.

It carries out the reaction hydrogen sulfide + 3 NADP(+) + 3 H2O = sulfite + 3 NADPH + 4 H(+). It functions in the pathway sulfur metabolism; hydrogen sulfide biosynthesis; hydrogen sulfide from sulfite (NADPH route): step 1/1. Its function is as follows. Component of the sulfite reductase complex that catalyzes the 6-electron reduction of sulfite to sulfide. This is one of several activities required for the biosynthesis of L-cysteine from sulfate. The flavoprotein component catalyzes the electron flow from NADPH -&gt; FAD -&gt; FMN to the hemoprotein component. This chain is Sulfite reductase [NADPH] flavoprotein alpha-component, found in Baumannia cicadellinicola subsp. Homalodisca coagulata.